Reading from the N-terminus, the 142-residue chain is Immunity protein WapI (142 aa).

Functionally, immunity protein component of a toxin-immunity protein module, which functions as a cellular contact-dependent growth inhibition (CDI) system. Neutralizes the tRNase activity of cognate toxin WapA upon expression in E.coli. Does not inhibit WapA from other strains of B.subtilis. The WapA C-terminus cannot be expressed on its own in E.coli, however it can be cloned in the presence of its cognate immunity protein gene. Cell contact is necessary for growth inhibition. Unlike the LXG toxin-immunity modules, WapAI mediates competition under shaking culture conditions. The polypeptide is Immunity protein WapI (wapI) (Bacillus subtilis (strain 168)).